The following is a 341-amino-acid chain: Tubulin beta chain (341 aa).

GTP is bound by residues Ser-64, Gly-68, Thr-69, Gly-70, Asn-130, and Asn-152.

It belongs to the tubulin family. In terms of assembly, dimer of alpha and beta chains. A typical microtubule is a hollow water-filled tube with an outer diameter of 25 nm and an inner diameter of 15 nM. Alpha-beta heterodimers associate head-to-tail to form protofilaments running lengthwise along the microtubule wall with the beta-tubulin subunit facing the microtubule plus end conferring a structural polarity. Microtubules usually have 13 protofilaments but different protofilament numbers can be found in some organisms and specialized cells. Requires Mg(2+) as cofactor.

Its subcellular location is the cytoplasm. The protein resides in the cytoskeleton. In terms of biological role, tubulin is the major constituent of microtubules, a cylinder consisting of laterally associated linear protofilaments composed of alpha- and beta-tubulin heterodimers. Microtubules grow by the addition of GTP-tubulin dimers to the microtubule end, where a stabilizing cap forms. Below the cap, tubulin dimers are in GDP-bound state, owing to GTPase activity of alpha-tubulin. The protein is Tubulin beta chain of Haliotis discus (Abalone).